A 240-amino-acid chain; its full sequence is Superoxide dismutase [Cu-Zn] (240 aa).

The first 32 residues, 1–32 (MPKPADHRNHAAVSTSVLSALFLGAGAALLSA), serve as a signal peptide directing secretion. C33 carries the N-palmitoyl cysteine lipid modification. C33 carries S-diacylglycerol cysteine lipidation. 2 stretches are compositionally biased toward polar residues: residues 36 to 51 (PQHASTVPGTTPSIWT) and 68 to 77 (GAQSLTSTLT). Residues 36 to 77 (PQHASTVPGTTPSIWTGSPAPSGLSGHDEESPGAQSLTSTLT) are disordered. Cu cation contacts are provided by H116 and H118. C123 and C234 are oxidised to a cystine. The Zn(2+) site is built by H146 and D158. H195 is a Cu cation binding site.

Belongs to the Cu-Zn superoxide dismutase family. The cofactor is Cu cation. Zn(2+) serves as cofactor.

Its subcellular location is the cell membrane. It catalyses the reaction 2 superoxide + 2 H(+) = H2O2 + O2. Its activity is regulated as follows. Inhibited by the copper chelator diethyl dithiocarbamate. Its function is as follows. Destroys radicals which are normally produced within the cells and which are toxic to biological systems. May play a role in favoring mycobacterial survival in phagocytes. The polypeptide is Superoxide dismutase [Cu-Zn] (sodC) (Mycobacterium bovis (strain ATCC BAA-935 / AF2122/97)).